We begin with the raw amino-acid sequence, 244 residues long: Flagellar L-ring protein (244 aa).

Positions 1–18 (MNMRVFIFLIFAAASVSA) are cleaved as a signal peptide. A lipid anchor (N-palmitoyl cysteine) is attached at C19. Residue C19 is the site of S-diacylglycerol cysteine attachment.

This sequence belongs to the FlgH family. In terms of assembly, the basal body constitutes a major portion of the flagellar organelle and consists of four rings (L,P,S, and M) mounted on a central rod.

The protein localises to the cell outer membrane. It is found in the bacterial flagellum basal body. Functionally, assembles around the rod to form the L-ring and probably protects the motor/basal body from shearing forces during rotation. This is Flagellar L-ring protein from Jannaschia sp. (strain CCS1).